We begin with the raw amino-acid sequence, 212 residues long: Uracil-DNA glycosylase (212 aa).

The active-site Proton acceptor is Asp-59.

This sequence belongs to the uracil-DNA glycosylase (UDG) superfamily. UNG family.

Its subcellular location is the cytoplasm. It catalyses the reaction Hydrolyzes single-stranded DNA or mismatched double-stranded DNA and polynucleotides, releasing free uracil.. Functionally, excises uracil residues from the DNA which can arise as a result of misincorporation of dUMP residues by DNA polymerase or due to deamination of cytosine. This is Uracil-DNA glycosylase from Ureaplasma urealyticum serovar 10 (strain ATCC 33699 / Western).